The following is a 71-amino-acid chain: Small ribosomal subunit protein bS21 (71 aa).

Belongs to the bacterial ribosomal protein bS21 family.

This Shewanella sediminis (strain HAW-EB3) protein is Small ribosomal subunit protein bS21.